We begin with the raw amino-acid sequence, 83 residues long: Small ribosomal subunit protein bS18A (83 aa).

Belongs to the bacterial ribosomal protein bS18 family. In terms of assembly, part of the 30S ribosomal subunit. Forms a tight heterodimer with protein bS6.

Binds as a heterodimer with protein bS6 to the central domain of the 16S rRNA, where it helps stabilize the platform of the 30S subunit. The polypeptide is Small ribosomal subunit protein bS18A (Mycolicibacterium vanbaalenii (strain DSM 7251 / JCM 13017 / BCRC 16820 / KCTC 9966 / NRRL B-24157 / PYR-1) (Mycobacterium vanbaalenii)).